The primary structure comprises 336 residues: Mitochondrial thiamine diphosphate carrier 2 (336 aa).

6 consecutive transmembrane segments (helical) span residues 11-27 (RRALVDSLAGAISGGIS), 88-105 (VPALLMYMPYTAIQFTVL), 127-150 (YLSYVSGALAGCAATIGSYPFDLL), 182-199 (LYSGLSPTLVEIIPYAGL), 230-246 (SVSSFQLFLCGFAAGTF), and 303-322 (GLFPSLVKSAPAGAVTFVAY). 3 Solcar repeats span residues 11–111 (RRAL…LKTF), 124–210 (LSPY…FKRS), and 231–328 (VSSF…ISDW).

Belongs to the mitochondrial carrier (TC 2.A.29) family. Ubiquitous.

Its subcellular location is the mitochondrion inner membrane. In terms of biological role, mitochondrial transporter that mediates uptake of thiamine diphosphate (ThDP) into mitochondria. In Zea mays (Maize), this protein is Mitochondrial thiamine diphosphate carrier 2.